Here is a 221-residue protein sequence, read N- to C-terminus: MVRIASGEMKERLAVYFIMGSQNSERPAADVLKEALDGGVTLFQFREKGPGALKGADKEALARQLQRLCRAYGVPFIVNDDVELALAIDADGVHVGQDDEDARRVREKIGDKILGVSAHNVEEAMAAVEAGADYLGVGPIYPTSSKEDAKEAQGPDVLRRLREAGITIPIVAIGGITAANAKTVVEAGADGVSVISAIASAPSPKAAAAALAEAVRAARTR.

4-amino-2-methyl-5-(diphosphooxymethyl)pyrimidine-binding positions include 44-48 and Asn-79; that span reads QFREK. The Mg(2+) site is built by Asp-80 and Asp-99. Ser-117 contributes to the 4-amino-2-methyl-5-(diphosphooxymethyl)pyrimidine binding site. 2-[(2R,5Z)-2-carboxy-4-methylthiazol-5(2H)-ylidene]ethyl phosphate is bound at residue 143–145; that stretch reads TSS. Lys-146 contributes to the 4-amino-2-methyl-5-(diphosphooxymethyl)pyrimidine binding site. Residues Gly-175 and 195-196 each bind 2-[(2R,5Z)-2-carboxy-4-methylthiazol-5(2H)-ylidene]ethyl phosphate; that span reads IS.

The protein belongs to the thiamine-phosphate synthase family. Mg(2+) serves as cofactor.

It carries out the reaction 2-[(2R,5Z)-2-carboxy-4-methylthiazol-5(2H)-ylidene]ethyl phosphate + 4-amino-2-methyl-5-(diphosphooxymethyl)pyrimidine + 2 H(+) = thiamine phosphate + CO2 + diphosphate. The catalysed reaction is 2-(2-carboxy-4-methylthiazol-5-yl)ethyl phosphate + 4-amino-2-methyl-5-(diphosphooxymethyl)pyrimidine + 2 H(+) = thiamine phosphate + CO2 + diphosphate. It catalyses the reaction 4-methyl-5-(2-phosphooxyethyl)-thiazole + 4-amino-2-methyl-5-(diphosphooxymethyl)pyrimidine + H(+) = thiamine phosphate + diphosphate. It participates in cofactor biosynthesis; thiamine diphosphate biosynthesis; thiamine phosphate from 4-amino-2-methyl-5-diphosphomethylpyrimidine and 4-methyl-5-(2-phosphoethyl)-thiazole: step 1/1. Its function is as follows. Condenses 4-methyl-5-(beta-hydroxyethyl)thiazole monophosphate (THZ-P) and 2-methyl-4-amino-5-hydroxymethyl pyrimidine pyrophosphate (HMP-PP) to form thiamine monophosphate (TMP). The chain is Thiamine-phosphate synthase from Geobacillus kaustophilus (strain HTA426).